Consider the following 206-residue polypeptide: Two-component response regulator ARR7 (206 aa).

The 128-residue stretch at 25–152 (HVLAVDDSIV…DVKRIKQLIM (128 aa)) folds into the Response regulatory domain. Position 85 is a 4-aspartylphosphate (Asp-85). Residues 165 to 206 (SNKRKLQEDSDTSSSSHDDTSIKDSSCSKRMKSESENLFSLL) form a disordered region.

The protein belongs to the ARR family. Type-A subfamily. In terms of processing, two-component system major event consists of a His-to-Asp phosphorelay between a sensor histidine kinase (HK) and a response regulator (RR). In plants, the His-to-Asp phosphorelay involves an additional intermediate named Histidine-containing phosphotransfer protein (HPt). This multistep phosphorelay consists of a His-Asp-His-Asp sequential transfer of a phosphate group between first a His and an Asp of the HK protein, followed by the transfer to a conserved His of the HPt protein and finally the transfer to an Asp in the receiver domain of the RR protein. Predominantly expressed in roots and young flowers.

The protein localises to the nucleus. Functionally, functions as a response regulator involved in His-to-Asp phosphorelay signal transduction system. Phosphorylation of the Asp residue in the receiver domain activates the ability of the protein to promote the transcription of target genes. Type-A response regulators seem to act as negative regulators of the cytokinin signaling. This Arabidopsis thaliana (Mouse-ear cress) protein is Two-component response regulator ARR7 (ARR7).